The following is a 297-amino-acid chain: MSEVKFEHKIASWKVDEVNSLKELLKSGNVIALIDMMEVPSVQLQEIRDTIRDSMTLKMSRNTLMKRAIEEVAEETGNPSFTKLIDCMEKGAALIATEMNPFKLYKTLNESKSPAPIKAGATAPCDIEIKAGSTGMPPGPFLSELKAVGLPAAIEKGKIGIKEDTIVAKEGDVVSAKLAVVLSKLDIKPMEVGLNVLGVYEDGIVYDPEILKIDEDEFLAKLQSAYTGAFNLSVNAVIPTSATIETIVQKAFSNAKAVSIEGAFLTSETSDAILGKATAQMLAVAKLAGEDALDDEL.

It belongs to the universal ribosomal protein uL10 family. As to quaternary structure, part of the 50S ribosomal subunit. Forms part of the ribosomal stalk which helps the ribosome interact with GTP-bound translation factors. Forms a heptameric L10(L12)2(L12)2(L12)2 complex, where L10 forms an elongated spine to which the L12 dimers bind in a sequential fashion.

Functionally, forms part of the ribosomal stalk, playing a central role in the interaction of the ribosome with GTP-bound translation factors. The polypeptide is Large ribosomal subunit protein uL10 (Methanococcus voltae).